Consider the following 191-residue polypeptide: Lipid A acyltransferase PagP (191 aa).

An N-terminal signal peptide occupies residues methionine 1–alanine 26. Residues histidine 63, aspartate 106, and serine 107 contribute to the active site.

It belongs to the lipid A palmitoyltransferase family. Homodimer.

It localises to the cell outer membrane. The enzyme catalyses a lipid A + a 1,2-diacyl-sn-glycero-3-phosphocholine = a hepta-acyl lipid A + a 2-acyl-sn-glycero-3-phosphocholine. The catalysed reaction is a lipid IVA + a 1,2-diacyl-sn-glycero-3-phosphocholine = a lipid IVB + a 2-acyl-sn-glycero-3-phosphocholine. It catalyses the reaction a lipid IIA + a 1,2-diacyl-sn-glycero-3-phosphocholine = a lipid IIB + a 2-acyl-sn-glycero-3-phosphocholine. Its function is as follows. Transfers a fatty acid residue from the sn-1 position of a phospholipid to the N-linked hydroxyfatty acid chain on the proximal unit of lipid A or its precursors. The protein is Lipid A acyltransferase PagP of Enterobacter lignolyticus (strain SCF1).